A 502-amino-acid chain; its full sequence is Capsid protein (502 aa).

Disordered stretches follow at residues 369-392 (ISEL…SDYD) and 405-487 (LTDS…TRKQ). A compositionally biased stretch (basic residues) spans 447 to 456 (SRRRKRRRRS).

This sequence belongs to the anelloviridae capsid protein family.

It localises to the virion. Its function is as follows. Self-assembles to form an icosahedral capsid with a T=1 symmetry, about 30 nm in diameter, and consisting of 60 capsid proteins. The capsid encapsulates the genomic DNA. Capsid protein is involved in attachment and entry into the host cell. In Tupaia, this protein is Capsid protein.